A 529-amino-acid polypeptide reads, in one-letter code: CTP synthase (529 aa).

The interval 1–267 (MKEAKFIFVT…DTQILEHFHL (267 aa)) is amidoligase domain. A CTP-binding site is contributed by serine 15. Serine 15 serves as a coordination point for UTP. ATP contacts are provided by residues 16 to 21 (SLGKGL) and aspartate 73. Mg(2+)-binding residues include aspartate 73 and glutamate 141. Residues 148 to 150 (DIE), 188 to 193 (KTKPTQ), and lysine 224 each bind CTP. UTP is bound by residues 188-193 (KTKPTQ) and lysine 224. One can recognise a Glutamine amidotransferase type-1 domain in the interval 292–529 (TVSIVGKYTE…SFVKAAIDKK (238 aa)). An L-glutamine-binding site is contributed by glycine 354. The active-site Nucleophile; for glutamine hydrolysis is the cysteine 381. L-glutamine contacts are provided by residues 382–385 (LGMQ), glutamate 405, and arginine 459. Catalysis depends on residues histidine 504 and glutamate 506.

This sequence belongs to the CTP synthase family. Homotetramer.

It carries out the reaction UTP + L-glutamine + ATP + H2O = CTP + L-glutamate + ADP + phosphate + 2 H(+). The catalysed reaction is L-glutamine + H2O = L-glutamate + NH4(+). The enzyme catalyses UTP + NH4(+) + ATP = CTP + ADP + phosphate + 2 H(+). It participates in pyrimidine metabolism; CTP biosynthesis via de novo pathway; CTP from UDP: step 2/2. With respect to regulation, allosterically activated by GTP, when glutamine is the substrate; GTP has no effect on the reaction when ammonia is the substrate. The allosteric effector GTP functions by stabilizing the protein conformation that binds the tetrahedral intermediate(s) formed during glutamine hydrolysis. Inhibited by the product CTP, via allosteric rather than competitive inhibition. In terms of biological role, catalyzes the ATP-dependent amination of UTP to CTP with either L-glutamine or ammonia as the source of nitrogen. Regulates intracellular CTP levels through interactions with the four ribonucleotide triphosphates. The chain is CTP synthase from Wolbachia pipientis wMel.